Reading from the N-terminus, the 352-residue chain is Carbohydrate sulfotransferase 11 (352 aa).

At 1–16 the chain is on the cytoplasmic side; that stretch reads MKQTILDLMRMSRICR. The chain crosses the membrane as a helical; Signal-anchor for type II membrane protein span at residues 17–37; that stretch reads MVLATCLGSFILVIFYFQSMF. The Lumenal portion of the chain corresponds to 38–352; it reads QPVMRRNPFA…YSIPSYLKLQ (315 aa). 3'-phosphoadenylyl sulfate contacts are provided by residues 124-130 and 186-194; these read PKVACTN and REPFERLVS. 4 N-linked (GlcNAc...) asparagine glycosylation sites follow: Asn205, Asn223, Asn321, and Asn342.

The protein belongs to the sulfotransferase 2 family.

Its subcellular location is the golgi apparatus membrane. The enzyme catalyses chondroitin beta-D-glucuronate + n 3'-phosphoadenylyl sulfate = chondroitin 4'-sulfate + n adenosine 3',5'-bisphosphate + n H(+). In terms of biological role, catalyzes the transfer of sulfate to position 4 of the N-acetylgalactosamine (GalNAc) residue of chondroitin. The chain is Carbohydrate sulfotransferase 11 (chst11) from Danio rerio (Zebrafish).